Consider the following 306-residue polypeptide: Meiotically up-regulated gene 73 protein (306 aa).

A run of 7 helical transmembrane segments spans residues 28–48, 59–79, 103–123, 125–145, 154–174, 190–210, and 224–244; these read YWAV…VSIF, FFSI…CNYG, YIQW…TVGV, ILEI…LLAA, WAYY…SVVL, FLWS…CWIL, and IFYS…FSWM.

This sequence belongs to the archaeal/bacterial/fungal opsin family.

It localises to the membrane. Functionally, has a role in meiosis. This chain is Meiotically up-regulated gene 73 protein (mug73), found in Schizosaccharomyces pombe (strain 972 / ATCC 24843) (Fission yeast).